A 236-amino-acid polypeptide reads, in one-letter code: 2,3,4,5-tetrahydropyridine-2,6-dicarboxylate N-acetyltransferase (236 aa).

It belongs to the transferase hexapeptide repeat family. DapH subfamily.

The enzyme catalyses (S)-2,3,4,5-tetrahydrodipicolinate + acetyl-CoA + H2O = L-2-acetamido-6-oxoheptanedioate + CoA. It functions in the pathway amino-acid biosynthesis; L-lysine biosynthesis via DAP pathway; LL-2,6-diaminopimelate from (S)-tetrahydrodipicolinate (acetylase route): step 1/3. Functionally, catalyzes the transfer of an acetyl group from acetyl-CoA to tetrahydrodipicolinate. In Clostridium botulinum (strain Langeland / NCTC 10281 / Type F), this protein is 2,3,4,5-tetrahydropyridine-2,6-dicarboxylate N-acetyltransferase.